The following is a 291-amino-acid chain: uncharacterized protein (291 aa).

It to E.cuniculi ECU03_0120.

This is an uncharacterized protein from Encephalitozoon cuniculi (strain GB-M1) (Microsporidian parasite).